A 243-amino-acid chain; its full sequence is MAELDPFGVPAGGPALGNGVAGEEDPAAAFLAQQESEIAGIENDEAFAILDGGAPGSQPHGEPPGIPDAVDGVTNGDYYQESNGPTDSYAAISQVDRLQSEPESIRKWREEQTERLEALDANSRKQEAEWKEKAIKELDEWYARQDEQLQKTKANNRVADEAFYKQPFADVIGYVTNINHPCYSLEQAAEEAFVNDIEESSPGTEWERVARLCDFNPKSSKQAKDVSRMRSVLISLKQAPLVH.

Position 1 is a blocked amino end (Met) (Met1). Disordered stretches follow at residues 1-22 and 49-87; these read MAEL…GVAG and ILDG…GPTD. Over residues 10–20 the composition is skewed to gly residues; sequence PAGGPALGNGV. Residues 95–157 are involved in binding clathrin heavy chain; the sequence is VDRLQSEPES…QLQKTKANNR (63 aa). Ser100 and Ser201 each carry phosphoserine. At Lys218 the chain carries N6-acetyllysine. The residue at position 231 (Ser231) is a Phosphoserine. N6-acetyllysine is present on Lys237.

This sequence belongs to the clathrin light chain family. In terms of assembly, clathrin coats are formed from molecules containing 3 heavy chains and 3 light chains. Interacts with CALY; the interaction stimulates clathrin self-assembly and clathrin-mediated endocytosis. Interacts with CKAP5 and TACC3 forming the TACC3/ch-TOG/clathrin complex located at spindle inter-microtubules bridges; the complex implicates clathrin triskelions.

The protein localises to the cytoplasmic vesicle membrane. Its subcellular location is the membrane. It localises to the coated pit. The protein resides in the cytoplasm. It is found in the cytoskeleton. The protein localises to the spindle. Functionally, clathrin is the major protein of the polyhedral coat of coated pits and vesicles. Acts as a component of the TACC3/ch-TOG/clathrin complex proposed to contribute to stabilization of kinetochore fibers of the mitotic spindle by acting as inter-microtubule bridge. The sequence is that of Clathrin light chain A (CLTA) from Bos taurus (Bovine).